Here is an 81-residue protein sequence, read N- to C-terminus: Photosystem I iron-sulfur center (81 aa).

4Fe-4S ferredoxin-type domains lie at 2 to 31 and 39 to 68; these read SHSV…MVSW and IASA…VRVY. Residues Cys-11, Cys-14, Cys-17, Cys-21, Cys-48, Cys-51, Cys-54, and Cys-58 each coordinate [4Fe-4S] cluster.

In terms of assembly, the eukaryotic PSI reaction center is composed of at least 11 subunits. It depends on [4Fe-4S] cluster as a cofactor.

It localises to the plastid. The protein localises to the chloroplast thylakoid membrane. It catalyses the reaction reduced [plastocyanin] + hnu + oxidized [2Fe-2S]-[ferredoxin] = oxidized [plastocyanin] + reduced [2Fe-2S]-[ferredoxin]. Functionally, apoprotein for the two 4Fe-4S centers FA and FB of photosystem I (PSI); essential for photochemical activity. FB is the terminal electron acceptor of PSI, donating electrons to ferredoxin. The C-terminus interacts with PsaA/B/D and helps assemble the protein into the PSI complex. Required for binding of PsaD and PsaE to PSI. PSI is a plastocyanin/cytochrome c6-ferredoxin oxidoreductase, converting photonic excitation into a charge separation, which transfers an electron from the donor P700 chlorophyll pair to the spectroscopically characterized acceptors A0, A1, FX, FA and FB in turn. In Rhodomonas salina (Cryptomonas salina), this protein is Photosystem I iron-sulfur center.